Reading from the N-terminus, the 474-residue chain is Magnesium transporter MRS2-A, chloroplastic (474 aa).

The transit peptide at 1 to 55 directs the protein to the chloroplast; it reads MASVSSSPSYSSQAAVLLLLHQPPHQHGHGGACLRYRGSQSQGRGNAVATSLGLS. A disordered region spans residues 79 to 129; sequence GKDGRAVTKDEEEEAAAAAVEEEGEVEVRREEDKPGDDGSREAAARGSGSG. A compositionally biased stretch (acidic residues) spans 88–103; it reads DEEEEAAAAAVEEEGE. Residues 104 to 122 are compositionally biased toward basic and acidic residues; that stretch reads VEVRREEDKPGDDGSREAA. 2 helical membrane-spanning segments follow: residues 412-432 and 444-464; these read LLLQ…GIFG and WAFW…FFIM. Positions 432–434 match the Required for magnesium transport activity motif; sequence GMN.

This sequence belongs to the CorA metal ion transporter (MIT) (TC 1.A.35.5) family.

The protein resides in the plastid. Its subcellular location is the chloroplast membrane. Its function is as follows. Magnesium transporter that may mediate the influx of magnesium in chloroplast. The polypeptide is Magnesium transporter MRS2-A, chloroplastic (MRS2-A) (Oryza sativa subsp. japonica (Rice)).